Consider the following 406-residue polypeptide: Bifunctional enzyme IspD/IspF (406 aa).

The tract at residues 1–247 is 2-C-methyl-D-erythritol 4-phosphate cytidylyltransferase; that stretch reads MSLIRVNGEA…ALFFNPAKDT (247 aa). A 2-C-methyl-D-erythritol 2,4-cyclodiphosphate synthase region spans residues 248–406; it reads FIGMGFDTHA…HVSMRYKQKL (159 aa). Asp-254 and His-256 together coordinate a divalent metal cation. 4-CDP-2-C-methyl-D-erythritol 2-phosphate is bound by residues 254–256 and 280–281; these read DTH and HS. Residue His-288 coordinates a divalent metal cation. 4-CDP-2-C-methyl-D-erythritol 2-phosphate is bound by residues 302–304, 307–311, 378–381, Phe-385, and Lys-388; these read DIG, FPDND, and TTME.

This sequence in the N-terminal section; belongs to the IspD/TarI cytidylyltransferase family. IspD subfamily. It in the C-terminal section; belongs to the IspF family. It depends on a divalent metal cation as a cofactor.

It catalyses the reaction 2-C-methyl-D-erythritol 4-phosphate + CTP + H(+) = 4-CDP-2-C-methyl-D-erythritol + diphosphate. It carries out the reaction 4-CDP-2-C-methyl-D-erythritol 2-phosphate = 2-C-methyl-D-erythritol 2,4-cyclic diphosphate + CMP. Its pathway is isoprenoid biosynthesis; isopentenyl diphosphate biosynthesis via DXP pathway; isopentenyl diphosphate from 1-deoxy-D-xylulose 5-phosphate: step 2/6. The protein operates within isoprenoid biosynthesis; isopentenyl diphosphate biosynthesis via DXP pathway; isopentenyl diphosphate from 1-deoxy-D-xylulose 5-phosphate: step 4/6. Its function is as follows. Bifunctional enzyme that catalyzes the formation of 4-diphosphocytidyl-2-C-methyl-D-erythritol from CTP and 2-C-methyl-D-erythritol 4-phosphate (MEP) (IspD), and catalyzes the conversion of 4-diphosphocytidyl-2-C-methyl-D-erythritol 2-phosphate (CDP-ME2P) to 2-C-methyl-D-erythritol 2,4-cyclodiphosphate (ME-CPP) with a corresponding release of cytidine 5-monophosphate (CMP) (IspF). In Helicobacter pylori (strain Shi470), this protein is Bifunctional enzyme IspD/IspF.